A 259-amino-acid polypeptide reads, in one-letter code: ATP synthase subunit a (259 aa).

A propeptide spans 1–10 (MFNLLNTYIT) (removed in mature form). 6 consecutive transmembrane segments (helical) span residues 36–56 (LTTF…LYTL), 92–112 (WGLY…ANLI), 125–145 (LVFI…LGLY), 150–170 (VFFS…LLVI), 191–211 (ILAG…FMLI), and 216–236 (LVFG…EFAI).

Belongs to the ATPase A chain family. As to quaternary structure, F-type ATPases have 2 components, CF(1) - the catalytic core - and CF(0) - the membrane proton channel. In yeast, the dimeric form of ATP synthase consists of 17 polypeptides: alpha, beta, gamma, delta, epsilon, 4 (B), 5 (OSCP), 6 (A), 8, 9 (C), d, E (Tim11), f, g, h, i/j and k.

The protein localises to the mitochondrion inner membrane. Functionally, mitochondrial membrane ATP synthase (F(1)F(0) ATP synthase or Complex V) produces ATP from ADP in the presence of a proton gradient across the membrane which is generated by electron transport complexes of the respiratory chain. F-type ATPases consist of two structural domains, F(1) - containing the extramembraneous catalytic core and F(0) - containing the membrane proton channel, linked together by a central stalk and a peripheral stalk. During catalysis, ATP synthesis in the catalytic domain of F(1) is coupled via a rotary mechanism of the central stalk subunits to proton translocation. Key component of the proton channel; it may play a direct role in the translocation of protons across the membrane. In Saccharomyces cerevisiae (strain ATCC 204508 / S288c) (Baker's yeast), this protein is ATP synthase subunit a (ATP6).